The primary structure comprises 327 residues: Eukaryotic translation initiation factor 3 subunit I (327 aa).

WD repeat units follow at residues 8-49 (GHDR…GTYD), 51-91 (HNGV…NSVS), 144-183 (SLQTQANSCVWTHLDDTVCVGNEKGNVHQYDIRKGDDIVN), 188-227 (AHKFQINDMQMSTDESFLITASKDKTARLFDARTLDCLKT), 229-268 (KAERPVNSAAISPIRDHVILGGGEEAMKVTQTTAASGHFE), and 285-324 (GHFGPINTLAFHPGGNCVVSGGEDGYVRIQEFDTDYLKFD).

It belongs to the eIF-3 subunit I family. In terms of assembly, component of the eukaryotic translation initiation factor 3 (eIF-3) complex.

It localises to the cytoplasm. In terms of biological role, component of the eukaryotic translation initiation factor 3 (eIF-3) complex, which is involved in protein synthesis of a specialized repertoire of mRNAs and, together with other initiation factors, stimulates binding of mRNA and methionyl-tRNAi to the 40S ribosome. The eIF-3 complex specifically targets and initiates translation of a subset of mRNAs involved in cell proliferation. The polypeptide is Eukaryotic translation initiation factor 3 subunit I (Brugia malayi (Filarial nematode worm)).